The sequence spans 126 residues: Thioredoxin-like 3-3 (126 aa).

Residues 1-24 (MRKQESEGANLEFESKSNDNGNVK) are disordered. Residues 5 to 126 (ESEGANLEFE…RLHDRLWLHS (122 aa)) form the Thioredoxin domain. Catalysis depends on nucleophile residues cysteine 55 and cysteine 58. An intrachain disulfide couples cysteine 55 to cysteine 58.

This sequence belongs to the thioredoxin family.

Its function is as follows. Probable thiol-disulfide oxidoreductase that may participate in various redox reactions. This is Thioredoxin-like 3-3 from Arabidopsis thaliana (Mouse-ear cress).